The primary structure comprises 487 residues: NADH-quinone oxidoreductase subunit N (487 aa).

14 consecutive transmembrane segments (helical) span residues Leu-8 to Ile-28, Ala-37 to Ala-57, Gly-71 to Gly-91, Glu-104 to His-124, Leu-125 to Tyr-145, Tyr-159 to Ala-179, Leu-203 to Phe-223, Pro-235 to Leu-255, Ile-269 to Leu-289, Ile-303 to Val-323, Gly-327 to Met-347, Ala-374 to Gly-394, Trp-408 to Arg-427, and Ala-449 to Leu-469.

Belongs to the complex I subunit 2 family. NDH-1 is composed of 14 different subunits. Subunits NuoA, H, J, K, L, M, N constitute the membrane sector of the complex.

It is found in the cell inner membrane. The enzyme catalyses a quinone + NADH + 5 H(+)(in) = a quinol + NAD(+) + 4 H(+)(out). Functionally, NDH-1 shuttles electrons from NADH, via FMN and iron-sulfur (Fe-S) centers, to quinones in the respiratory chain. The immediate electron acceptor for the enzyme in this species is believed to be ubiquinone. Couples the redox reaction to proton translocation (for every two electrons transferred, four hydrogen ions are translocated across the cytoplasmic membrane), and thus conserves the redox energy in a proton gradient. In Aeromonas hydrophila subsp. hydrophila (strain ATCC 7966 / DSM 30187 / BCRC 13018 / CCUG 14551 / JCM 1027 / KCTC 2358 / NCIMB 9240 / NCTC 8049), this protein is NADH-quinone oxidoreductase subunit N.